A 593-amino-acid chain; its full sequence is Cyclin-dependent kinase-like 3 (593 aa).

The region spanning 4-286 is the Protein kinase domain; it reads YETLGKVGEG…STDLLHHDYF (283 aa). Residues 10–18 and K33 each bind ATP; that span reads VGEGSYGTV. The short motif at 45-51 is the [NKR]KIAxRE element; the sequence is KIATREI. The Proton acceptor role is filled by D125. T158 is modified (phosphothreonine). A Phosphotyrosine modification is found at Y160. Basic and acidic residues predominate over residues 368 to 403; that stretch reads GKGDVPDLKKTESEGEHRQQGTAEDTHPTSLDRKPS. The tract at residues 368 to 512 is disordered; it reads GKGDVPDLKK…NDQIASGNKR (145 aa). Residues 436–452 are compositionally biased toward low complexity; it reads NLTSSNLLAANPSSNLS. 2 stretches are compositionally biased toward polar residues: residues 468-491 and 499-508; these read SSQTIGQTLSNSRQEDTGPTQVQT and RTGQNDQIAS.

The protein belongs to the protein kinase superfamily. CMGC Ser/Thr protein kinase family. CDC2/CDKX subfamily. As to expression, highly expressed in brain, and to a lower extent in heart and testis.

The protein resides in the nucleus. Its subcellular location is the cytoplasm. The enzyme catalyses L-seryl-[protein] + ATP = O-phospho-L-seryl-[protein] + ADP + H(+). The catalysed reaction is L-threonyl-[protein] + ATP = O-phospho-L-threonyl-[protein] + ADP + H(+). This chain is Cyclin-dependent kinase-like 3, found in Rattus norvegicus (Rat).